Here is a 2294-residue protein sequence, read N- to C-terminus: Protein Ycf2 (2294 aa).

Residue Gly-1648–Ser-1655 participates in ATP binding.

It belongs to the Ycf2 family.

It localises to the plastid. The protein resides in the chloroplast stroma. Its function is as follows. Probable ATPase of unknown function. Its presence in a non-photosynthetic plant (Epifagus virginiana) and experiments in tobacco indicate that it has an essential function which is probably not related to photosynthesis. This chain is Protein Ycf2, found in Arabidopsis thaliana (Mouse-ear cress).